The primary structure comprises 2032 residues: Cytoskeleton-associated protein 5 (2032 aa).

2 TOG regions span residues 1–223 (MGDD…KLPT) and 268–502 (YELL…LIHG). An N6-acetyllysine modification is found at Lys48. HEAT repeat units follow at residues 159–197 (IILL…WIRD), 356–394 (GQYA…TTTL), and 434–472 (KSLL…VVGE). The segment at 516–579 (PLPGRTAASG…GTKNKKGLET (64 aa)) is disordered. The segment covering 543-554 (LKKAPAAKAGGP) has biased composition (low complexity). The tract at residues 588–817 (SIEVCEEKAS…EFEKMQGQSP (230 aa)) is TOG 3. The HEAT 4 repeat unit spans residues 750–788 (GLNVKAFISNVKTALAATNPAVRTAAITLLGVMYLYVGP). Positions 811–851 (KMQGQSPPAPTRGISKHSTSGTDEGEDGDEPDDGSNDVVDL) are disordered. Ser816 and Ser845 each carry phosphoserine. The segment covering 833 to 845 (DEGEDGDEPDDGS) has biased composition (acidic residues). TOG stretches follow at residues 853-1081 (PRTE…VNMP) and 1193-1428 (IEQL…KRPS). HEAT repeat units follow at residues 855–893 (TEIS…DAKF), 936–974 (KQHV…QTGM), and 1013–1051 (PTDL…HLGY). The interval 1077–1160 (KVNMPAKPAP…KEDEDKSGPI (84 aa)) is disordered. HEAT repeat units lie at residues 1284-1322 (ENEA…VYPA), 1324-1357 (KMFP…SYGM), and 1361-1399 (QPTP…VHGD). Residues 1422–1443 (RSAKRPSAAPIKQVEEKPQRAQ) form a disordered region. Position 1469 is a phosphoserine (Ser1469). The interval 1801-1822 (SMDQTGSKSDKETEKGASRIDE) is disordered. Residues 1808–1822 (KSDKETEKGASRIDE) are compositionally biased toward basic and acidic residues. Residue Ser1861 is modified to Phosphoserine. The tract at residues 1932-1957 (PSVYLERLKILRQRCGLDNTKQDDRP) is interaction with TACC3. Residues 1949-2032 (DNTKQDDRPP…RLERIKSSRK (84 aa)) are disordered. A compositionally biased stretch (polar residues) spans 1971 to 1983 (VASSTDMLHSKLS). Over residues 1984–1997 (QLRESREQHQHSDL) the composition is skewed to basic and acidic residues. The segment covering 2002-2014 (THSSGTVTSSSST) has biased composition (low complexity). Over residues 2018 to 2032 (DDLKKRLERIKSSRK) the composition is skewed to basic and acidic residues.

The protein belongs to the TOG/XMAP215 family. In terms of assembly, interacts with TACC1. Interacts with SLAIN2 and SLAIN1. Interacts with HNRNPA2B1. Interacts with TACC3 independently of clathrin. Interacts with TACC3 and clathrin forming the TACC3/ch-TOG/clathrin complex located at spindle inter-microtubules bridges. Interacts with NDC80; indicative for an association with the NDC80 complex. In terms of tissue distribution, overexpressed in hepatomas and colonic tumors. Also expressed in skeletal muscle, brain, heart, placenta, lung, liver, kidney and pancreas. Expression is elevated in the brain; highly expressed in the Purkinje cell bodies of the cerebellum.

It localises to the cytoplasm. Its subcellular location is the cytoskeleton. The protein localises to the microtubule organizing center. It is found in the centrosome. The protein resides in the spindle pole. It localises to the spindle. Its subcellular location is the chromosome. The protein localises to the centromere. It is found in the kinetochore. Its function is as follows. Binds to the plus end of microtubules and regulates microtubule dynamics and microtubule organization. Acts as a processive microtubule polymerase. Promotes cytoplasmic microtubule nucleation and elongation. Plays a major role in organizing spindle poles. In spindle formation protects kinetochore microtubules from depolymerization by KIF2C and has an essential role in centrosomal microtubule assembly independently of KIF2C activity. Contributes to centrosome integrity. Acts as a component of the TACC3/ch-TOG/clathrin complex proposed to contribute to stabilization of kinetochore fibers of the mitotic spindle by acting as inter-microtubule bridge. The TACC3/ch-TOG/clathrin complex is required for the maintenance of kinetochore fiber tension. Enhances the strength of NDC80 complex-mediated kinetochore-tip microtubule attachments. The protein is Cytoskeleton-associated protein 5 (CKAP5) of Homo sapiens (Human).